Here is a 102-residue protein sequence, read N- to C-terminus: MIPGEILTEPGQIELNVGRPTLTIAVVNEDDRPIQVGSHYHFAEANNALVFDRELATGYRLNIPAGNAVRFEPGMRRTVELVAVGGERRIFGFQGKVMGALK.

It belongs to the urease beta subunit family. In terms of assembly, heterotrimer of UreA (gamma), UreB (beta) and UreC (alpha) subunits. Three heterotrimers associate to form the active enzyme.

The protein localises to the cytoplasm. It carries out the reaction urea + 2 H2O + H(+) = hydrogencarbonate + 2 NH4(+). It participates in nitrogen metabolism; urea degradation; CO(2) and NH(3) from urea (urease route): step 1/1. This is Urease subunit beta from Bordetella pertussis (strain Tohama I / ATCC BAA-589 / NCTC 13251).